The primary structure comprises 677 residues: Methionine--tRNA ligase (677 aa).

A 'HIGH' region motif is present at residues 15 to 25; that stretch reads PYANGSIHLGH. C146, C149, C159, and C162 together coordinate Zn(2+). Residues 333-337 carry the 'KMSKS' region motif; the sequence is KMSKS. K336 lines the ATP pocket. Positions 575 to 677 constitute a tRNA-binding domain; that stretch reads DFAKVDLRVA…AGAKPGHQVK (103 aa).

Belongs to the class-I aminoacyl-tRNA synthetase family. MetG type 1 subfamily. Homodimer. Requires Zn(2+) as cofactor.

It is found in the cytoplasm. It carries out the reaction tRNA(Met) + L-methionine + ATP = L-methionyl-tRNA(Met) + AMP + diphosphate. Is required not only for elongation of protein synthesis but also for the initiation of all mRNA translation through initiator tRNA(fMet) aminoacylation. In Escherichia coli O6:K15:H31 (strain 536 / UPEC), this protein is Methionine--tRNA ligase.